The chain runs to 70 residues: Ubiquinol-cytochrome c reductase complex assembly factor 5 (70 aa).

The Mitochondrial matrix segment spans residues 1–19; it reads MFTRAQVRRILQRVPGKQR. The helical transmembrane segment at 20 to 41 threads the bilayer; it reads FGIYRFLPFFFVLGGTMEWIMI. Over 42–70 the chain is Mitochondrial intermembrane; it reads KVRVGQETFYDVYRRKASERQYQRRLEDE.

The protein belongs to the UQCC5 family. As to quaternary structure, associates with the mitochondrial ribosome. Interacts with UQCC6. Interacts with MT-CYB; interacts with newly synthesizes MT-CYB. Forms a complex, named COMB/coordinator of mitochondrial CYTB biogenesis, composed of UQCC1, UQCC2, UQCC4, UQCC5 and UQCC6; regulates MT-CYB synthesis and promotes its membrane insertion.

It localises to the mitochondrion inner membrane. In terms of biological role, required for the assembly and stability of the mitochondrial ubiquinol-cytochrome c reductase complex (complex III (CIII) or cytochrome b-c1 complex), a multisubunit transmembrane complex that is part of the mitochondrial electron transport chain (ETC) which drives oxidative phosphorylation. Mediates early complex III biogenesis. Participates in regulating the levels of electron transport chain proteins, and therefore energy supply, in response to changes in energy demand. Also involved in the first steps of cytochrome c oxidase complex (complex IV) assembly. In Homo sapiens (Human), this protein is Ubiquinol-cytochrome c reductase complex assembly factor 5.